Here is a 412-residue protein sequence, read N- to C-terminus: Transcription termination factor 3, mitochondrial (412 aa).

Residues 1-67 (MALLAQQLPR…IKTYRTLFWN (67 aa)) constitute a mitochondrion transit peptide.

The protein belongs to the mTERF family.

The protein localises to the mitochondrion. In terms of biological role, binds promoter DNA and regulates initiation of transcription. Required for normal mitochondrial transcription and translation, and for normal assembly of mitochondrial respiratory complexes. Required for normal mitochondrial function. Maintains 16S rRNA levels and functions in mitochondrial ribosome assembly by regulating the biogenesis of the 39S ribosomal subunit. This is Transcription termination factor 3, mitochondrial (Mterf3) from Mus musculus (Mouse).